Consider the following 410-residue polypeptide: Histone-lysine N-methyltransferase SUV39H2 (410 aa).

Positions 47-105 constitute a Chromo domain; sequence YEVEYLCDYKVVKDMEYYLVKWKGWPDSTNTWEPLQNLKCPLLLQQFSNDKHNYLSQVK. The region spanning 189–247 is the Pre-SET domain; it reads FGCSCTDCFFQKCCPAEAGVLLAYNKNQQIKIPPGTPIYECNSRCQCGPDCPNRIVQKG. Residues Cys-191, Cys-193, Cys-196, Cys-201, Cys-202, Cys-229, Cys-233, Cys-235, and Cys-239 each contribute to the Zn(2+) site. The SET domain maps to 250–373; sequence YSLCIFRTSN…AGEELTFDYQ (124 aa). S-adenosyl-L-methionine-binding positions include 261 to 263 and 330 to 331; these read RGW and NH. Cys-333 contributes to the Zn(2+) binding site. Position 372 (Tyr-372) interacts with S-adenosyl-L-methionine. Residues Ser-381, Ser-384, and Ser-388 each carry the phosphoserine modification. The Post-SET domain maps to 394-410; that stretch reads VRTVCKCGAVTCRGYLN. Cys-398 is a Zn(2+) binding site. Position 399 (Lys-399) interacts with S-adenosyl-L-methionine. Zn(2+)-binding residues include Cys-400 and Cys-405.

The protein belongs to the class V-like SAM-binding methyltransferase superfamily. Histone-lysine methyltransferase family. Suvar3-9 subfamily. Interacts with SMAD5. The large PER complex involved in the histone methylation is composed of at least PER2, CBX3, TRIM28, SUV39H1 and/or SUV39H2; CBX3 mediates the formation of the complex. Ubiquitinated by the DCX(DCAF13) E3 ubiquitin ligase complex, leading to its degradation.

It localises to the nucleus. The protein resides in the chromosome. The protein localises to the centromere. The catalysed reaction is L-lysyl(9)-[histone H3] + 3 S-adenosyl-L-methionine = N(6),N(6),N(6)-trimethyl-L-lysyl(9)-[histone H3] + 3 S-adenosyl-L-homocysteine + 3 H(+). Histone methyltransferase that specifically trimethylates 'Lys-9' of histone H3 using monomethylated H3 'Lys-9' as substrate. H3 'Lys-9' trimethylation represents a specific tag for epigenetic transcriptional repression by recruiting HP1 (CBX1, CBX3 and/or CBX5) proteins to methylated histones. Mainly functions in heterochromatin regions, thereby playing a central role in the establishment of constitutive heterochromatin at pericentric and telomere regions. H3 'Lys-9' trimethylation is also required to direct DNA methylation at pericentric repeats. SUV39H1 is targeted to histone H3 via its interaction with RB1 and is involved in many processes, such as cell cycle regulation, transcriptional repression and regulation of telomere length. May participate in regulation of higher-order chromatin organization during spermatogenesis. Recruited by the large PER complex to the E-box elements of the circadian target genes such as PER2 itself or PER1, contributes to the conversion of local chromatin to a heterochromatin-like repressive state through H3 'Lys-9' trimethylation. The protein is Histone-lysine N-methyltransferase SUV39H2 (SUV39H2) of Homo sapiens (Human).